The sequence spans 245 residues: UDP-N-acetyl-D-mannosaminuronic acid transferase (245 aa).

Belongs to the glycosyltransferase 26 family.

The catalysed reaction is UDP-N-acetyl-alpha-D-mannosaminouronate + N-acetyl-alpha-D-glucosaminyl-di-trans,octa-cis-undecaprenyl diphosphate = beta-D-ManNAcA-(1-&gt;4)-alpha-D-GlcNAc-di-trans,octa-cis-undecaprenyl diphosphate + UDP + H(+). The protein operates within bacterial outer membrane biogenesis; enterobacterial common antigen biosynthesis. In terms of biological role, catalyzes the synthesis of Und-PP-GlcNAc-ManNAcA (Lipid II), the second lipid-linked intermediate involved in enterobacterial common antigen (ECA) synthesis. This chain is UDP-N-acetyl-D-mannosaminuronic acid transferase, found in Photorhabdus laumondii subsp. laumondii (strain DSM 15139 / CIP 105565 / TT01) (Photorhabdus luminescens subsp. laumondii).